A 94-amino-acid polypeptide reads, in one-letter code: DNA-directed RNA polymerase subunit omega (94 aa).

Belongs to the RNA polymerase subunit omega family. The RNAP catalytic core consists of 2 alpha, 1 beta, 1 beta' and 1 omega subunit. When a sigma factor is associated with the core the holoenzyme is formed, which can initiate transcription.

The enzyme catalyses RNA(n) + a ribonucleoside 5'-triphosphate = RNA(n+1) + diphosphate. Its function is as follows. Promotes RNA polymerase assembly. Latches the N- and C-terminal regions of the beta' subunit thereby facilitating its interaction with the beta and alpha subunits. The polypeptide is DNA-directed RNA polymerase subunit omega (Bifidobacterium longum subsp. infantis (strain ATCC 15697 / DSM 20088 / JCM 1222 / NCTC 11817 / S12)).